The following is a 699-amino-acid chain: MAEGQSPENSPPAPPPPSPPSPPSSNDQQTTSPPPSDNQETTSPPPPSSPDIAPPPQQQQESPPPPLPENSSDGSSSSSPPPPSDSSSQSQSPPPPSTSPPQQSDNNGNKGNNNENNKGNDGSSGDGGNKNMSHTPPPPSKTSDHSSHSQPRSLAPPTSNSGSNSSSNDGLNIGAVIGLVAAAGILFIVMILLCVCCFRKKKKKSKLDQMPYYGSNAYPAGKTGGDQYYNQNAATQQQQHYNQNDHIVNLPPPPGSMGTNWVSSPPPPPPGNWQPMPSPPAPVSGGANVIQSGEMSSNFSSGPYAPSLPPPHPSVALGFNNSTFTYEELASATQGFSKDRLLGQGGFGYVHKGILPNGKEIAVKSLKAGSGQGEREFQAEVEIISRVHHRHLVSLVGYCSNAGGQRLLVYEFLPNDTLEFHLHGKSGTVMDWPTRLKIALGSAKGLAYLHEDCHPKIIHRDIKASNILLDHNFEAKVADFGLAKLSQDNNTHVSTRVMGTFGYLAPEYASSGKLTEKSDVFSFGVMLLELITGRGPVDLSGDMEDSLVDWARPLCMRVAQDGEYGELVDPFLEHQYEPYEMARMVACAAAAVRHSGRRRPKMSQIVRTLEGDASLDDLDDGVKPKQSSSGGEGSSDYEMGTYGAEMRKFRKVTLESRDYGASSEYGATSEYGLDPSSSSSEEMHIGGSTSKTTTTNRGI.

The disordered stretch occupies residues 1 to 167; that stretch reads MAEGQSPENS…TSNSGSNSSS (167 aa). Residues 1-172 lie on the Extracellular side of the membrane; that stretch reads MAEGQSPENS…SNSSSNDGLN (172 aa). 2 stretches are compositionally biased toward pro residues: residues 9 to 23 and 43 to 68; these read NSPP…PSPP and SPPP…PPLP. N-linked (GlcNAc...) asparagine glycosylation is present at Asn70. Low complexity predominate over residues 100 to 121; it reads PPQQSDNNGNKGNNNENNKGND. An N-linked (GlcNAc...) asparagine glycan is attached at Asn131. Residues 148–158 show a composition bias toward polar residues; sequence HSQPRSLAPPT. An N-linked (GlcNAc...) asparagine glycan is attached at Asn164. The helical transmembrane segment at 173 to 193 threads the bilayer; sequence IGAVIGLVAAAGILFIVMILL. Residues 194–699 are Cytoplasmic-facing; the sequence is CVCCFRKKKK…SKTTTTNRGI (506 aa). At Thr325 the chain carries Phosphothreonine. Residues 336 to 615 enclose the Protein kinase domain; the sequence is FSKDRLLGQG…VRTLEGDASL (280 aa). ATP is bound by residues 342-350 and Lys364; that span reads LGQGGFGYV. Tyr410 carries the post-translational modification Phosphotyrosine. The active-site Proton acceptor is Asp461. Residues Ser465 and Ser494 each carry the phosphoserine modification. Phosphothreonine occurs at positions 495 and 500. Tyr508 is modified (phosphotyrosine). Disordered stretches follow at residues 609-639 and 658-699; these read LEGD…DYEM and DYGA…NRGI. The segment covering 687-699 has biased composition (polar residues); it reads GSTSKTTTTNRGI.

This sequence belongs to the protein kinase superfamily. Ser/Thr protein kinase family. Mostly expressed in flower buds.

Its subcellular location is the cell membrane. It catalyses the reaction L-seryl-[protein] + ATP = O-phospho-L-seryl-[protein] + ADP + H(+). The enzyme catalyses L-threonyl-[protein] + ATP = O-phospho-L-threonyl-[protein] + ADP + H(+). The protein is Proline-rich receptor-like protein kinase PERK7 (PERK7) of Arabidopsis thaliana (Mouse-ear cress).